A 101-amino-acid chain; its full sequence is MRERYLYLADTPQGILMSGQVPEYQFWLLAEISPVHSEKVINALRDYLVMGYNRMEACGRHSVSPGYFSGALKRFQRVSQTVYRLVPFYFPEAGHEVHRGE.

Regulates the transcription of genes involved in the biosynthesis of afimbrial adhesin-III. The protein is AFA-III adhesin operon regulatory protein (afaA) of Escherichia coli.